Here is a 343-residue protein sequence, read N- to C-terminus: Nicotianamine synthase 3 (343 aa).

Belongs to the nicotianamine synthase (NAS)-like family. Expressed in leaves.

It catalyses the reaction 3 S-adenosyl-L-methionine = nicotianamine + 3 S-methyl-5'-thioadenosine + 3 H(+). Synthesizes nicotianamine, a polyamine that is the first intermediate in the synthesis of the phytosiderophores of the mugineic acid type found in gramineae which serve as a sensor for the physiological iron status within the plant, and/or might be involved in the transport of iron. This chain is Nicotianamine synthase 3 (NAS3), found in Oryza sativa subsp. indica (Rice).